We begin with the raw amino-acid sequence, 311 residues long: Pyrimidine-specific ribonucleoside hydrolase RihA (311 aa).

The active site involves histidine 240.

Belongs to the IUNH family. RihA subfamily.

In terms of biological role, hydrolyzes with equal efficiency cytidine or uridine to ribose and cytosine or uracil, respectively. This Escherichia coli O17:K52:H18 (strain UMN026 / ExPEC) protein is Pyrimidine-specific ribonucleoside hydrolase RihA.